Here is a 252-residue protein sequence, read N- to C-terminus: Imidazole glycerol phosphate synthase subunit HisF (252 aa).

Active-site residues include D11 and D130.

This sequence belongs to the HisA/HisF family. As to quaternary structure, heterodimer of HisH and HisF.

It localises to the cytoplasm. The catalysed reaction is 5-[(5-phospho-1-deoxy-D-ribulos-1-ylimino)methylamino]-1-(5-phospho-beta-D-ribosyl)imidazole-4-carboxamide + L-glutamine = D-erythro-1-(imidazol-4-yl)glycerol 3-phosphate + 5-amino-1-(5-phospho-beta-D-ribosyl)imidazole-4-carboxamide + L-glutamate + H(+). It participates in amino-acid biosynthesis; L-histidine biosynthesis; L-histidine from 5-phospho-alpha-D-ribose 1-diphosphate: step 5/9. IGPS catalyzes the conversion of PRFAR and glutamine to IGP, AICAR and glutamate. The HisF subunit catalyzes the cyclization activity that produces IGP and AICAR from PRFAR using the ammonia provided by the HisH subunit. This is Imidazole glycerol phosphate synthase subunit HisF from Staphylococcus aureus (strain bovine RF122 / ET3-1).